A 273-amino-acid chain; its full sequence is Tryptase (273 aa).

The N-terminal stretch at 1–18 is a signal peptide; it reads MLKLLLLTLPLLSSLVHA. Positions 19–28 are cleaved as a propeptide — activation peptide; the sequence is APGPAMTREG. A Peptidase S1 domain is found at 29–270; that stretch reads IVGGQEAHGN…YLDWIHHYVP (242 aa). Asparagine 49 carries an N-linked (GlcNAc...) asparagine glycan. Cysteine 57 and cysteine 73 are disulfide-bonded. Active-site charge relay system residues include histidine 72 and aspartate 119. N-linked (GlcNAc...) asparagine glycosylation is present at asparagine 130. 3 cysteine pairs are disulfide-bonded: cysteine 153/cysteine 228, cysteine 186/cysteine 209, and cysteine 218/cysteine 246. Serine 222 (charge relay system) is an active-site residue.

This sequence belongs to the peptidase S1 family. Tryptase subfamily.

The enzyme catalyses Preferential cleavage: Arg-|-Xaa, Lys-|-Xaa, but with more restricted specificity than trypsin.. Functionally, tryptase is the major neutral protease present in mast cells and is secreted upon the coupled activation-degranulation response of this cell type. May play a role in innate immunity. The chain is Tryptase (Tpsab1) from Mus musculus (Mouse).